Reading from the N-terminus, the 227-residue chain is RNA-free ribonuclease P (227 aa).

This sequence belongs to the HARP family.

It catalyses the reaction Endonucleolytic cleavage of RNA, removing 5'-extranucleotides from tRNA precursor.. Functionally, RNA-free RNase P that catalyzes the removal of the 5'-leader sequence from pre-tRNA to produce the mature 5'-terminus. The chain is RNA-free ribonuclease P from Archaeoglobus fulgidus (strain ATCC 49558 / DSM 4304 / JCM 9628 / NBRC 100126 / VC-16).